Reading from the N-terminus, the 611-residue chain is Leukotriene A-4 hydrolase (611 aa).

N6-acetyllysine is present on Lys-73. A peptide is bound by residues 135–137 (QCQ) and 267–272 (PYGGME). A Zn(2+)-binding site is contributed by His-296. Glu-297 serves as the catalytic Proton acceptor. 2 residues coordinate Zn(2+): His-300 and Glu-319. The residue at position 337 (Lys-337) is an N6-acetyllysine. The active-site Proton donor is Tyr-384. An N6-acetyllysine modification is found at Lys-414. Ser-416 bears the Phosphoserine mark. 564-566 (RMK) serves as a coordination point for a peptide. Lys-573 carries the post-translational modification N6-acetyllysine.

The protein belongs to the peptidase M1 family. Monomer. Zn(2+) serves as cofactor. Post-translationally, phosphorylation at Ser-416 inhibits leukotriene-A4 hydrolase activity. As to expression, isoform 1 and isoform 2 are expressed in monocytes, lymphocytes, neutrophils, reticulocytes, platelets and fibroblasts.

It localises to the cytoplasm. The catalysed reaction is leukotriene A4 + H2O = leukotriene B4. It carries out the reaction (5S,6S)-epoxy-(18R)-hydroxy-(7E,9E,11Z,14Z,16E)-eicosapentaenoate + H2O = resolvin E1. The enzyme catalyses (5S,6S)-epoxy-(18S)-hydroxy-(7E,9E,11Z,14Z,16E)-eicosapentaenoate + H2O = 18S-resolvin E1. It catalyses the reaction Release of the N-terminal residue from a tripeptide.. Its pathway is lipid metabolism; leukotriene B4 biosynthesis. With respect to regulation, inhibited by bestatin. The epoxide hydrolase activity is restrained by suicide inactivation that involves binding of LTA4 to Tyr-379. 4-(4-benzylphenyl)thiazol-2-amine (ARM1) selectively inhibits the epoxide hydrolase activity. Its function is as follows. Bifunctional zinc metalloenzyme that comprises both epoxide hydrolase (EH) and aminopeptidase activities. Acts as an epoxide hydrolase to catalyze the conversion of LTA4 to the pro-inflammatory mediator leukotriene B4 (LTB4). Also has aminopeptidase activity, with high affinity for N-terminal arginines of various synthetic tripeptides. In addition to its pro-inflammatory EH activity, may also counteract inflammation by its aminopeptidase activity, which inactivates by cleavage another neutrophil attractant, the tripeptide Pro-Gly-Pro (PGP), a bioactive fragment of collagen generated by the action of matrix metalloproteinase-9 (MMP9) and prolylendopeptidase (PREPL). Involved also in the biosynthesis of resolvin E1 and 18S-resolvin E1 from eicosapentaenoic acid, two lipid mediators that show potent anti-inflammatory and pro-resolving actions. This Homo sapiens (Human) protein is Leukotriene A-4 hydrolase (LTA4H).